A 537-amino-acid chain; its full sequence is O-phosphoserine--tRNA(Cys) ligase (537 aa).

Residues 186–188 (HMT), 231–233 (SAS), 273–274 (YY), and N317 contribute to the substrate site.

Belongs to the class-II aminoacyl-tRNA synthetase family. O-phosphoseryl-tRNA(Cys) synthetase subfamily. Homotetramer. Interacts with SepCysS.

It catalyses the reaction tRNA(Cys) + O-phospho-L-serine + ATP = O-phospho-L-seryl-tRNA(Cys) + AMP + diphosphate. In terms of biological role, catalyzes the attachment of O-phosphoserine (Sep) to tRNA(Cys). The protein is O-phosphoserine--tRNA(Cys) ligase of Methanococcus maripaludis (strain C5 / ATCC BAA-1333).